Reading from the N-terminus, the 265-residue chain is 4-hydroxy-tetrahydrodipicolinate reductase (265 aa).

NAD(+) is bound by residues Gly7–Met12 and Asp33. Residue Arg34 participates in NADP(+) binding. NAD(+) contacts are provided by residues Gly96–Thr98 and Ala120–Met123. His153 serves as the catalytic Proton donor/acceptor. Residue His154 coordinates (S)-2,3,4,5-tetrahydrodipicolinate. Lys157 serves as the catalytic Proton donor. A (S)-2,3,4,5-tetrahydrodipicolinate-binding site is contributed by Gly163–Thr164.

Belongs to the DapB family.

The protein resides in the cytoplasm. The enzyme catalyses (S)-2,3,4,5-tetrahydrodipicolinate + NAD(+) + H2O = (2S,4S)-4-hydroxy-2,3,4,5-tetrahydrodipicolinate + NADH + H(+). The catalysed reaction is (S)-2,3,4,5-tetrahydrodipicolinate + NADP(+) + H2O = (2S,4S)-4-hydroxy-2,3,4,5-tetrahydrodipicolinate + NADPH + H(+). The protein operates within amino-acid biosynthesis; L-lysine biosynthesis via DAP pathway; (S)-tetrahydrodipicolinate from L-aspartate: step 4/4. In terms of biological role, catalyzes the conversion of 4-hydroxy-tetrahydrodipicolinate (HTPA) to tetrahydrodipicolinate. This Burkholderia ambifaria (strain ATCC BAA-244 / DSM 16087 / CCUG 44356 / LMG 19182 / AMMD) (Burkholderia cepacia (strain AMMD)) protein is 4-hydroxy-tetrahydrodipicolinate reductase.